A 119-amino-acid polypeptide reads, in one-letter code: Putative membrane protein insertion efficiency factor (119 aa).

The tract at residues N82–A119 is disordered.

Belongs to the UPF0161 family.

It is found in the cell membrane. Could be involved in insertion of integral membrane proteins into the membrane. The polypeptide is Putative membrane protein insertion efficiency factor (Streptomyces griseus subsp. griseus (strain JCM 4626 / CBS 651.72 / NBRC 13350 / KCC S-0626 / ISP 5235)).